The chain runs to 483 residues: Glutamyl-tRNA(Gln) amidotransferase subunit A (483 aa).

Active-site charge relay system residues include Lys76 and Ser151. Catalysis depends on Ser175, which acts as the Acyl-ester intermediate.

Belongs to the amidase family. GatA subfamily. As to quaternary structure, heterotrimer of A, B and C subunits.

The catalysed reaction is L-glutamyl-tRNA(Gln) + L-glutamine + ATP + H2O = L-glutaminyl-tRNA(Gln) + L-glutamate + ADP + phosphate + H(+). Functionally, allows the formation of correctly charged Gln-tRNA(Gln) through the transamidation of misacylated Glu-tRNA(Gln) in organisms which lack glutaminyl-tRNA synthetase. The reaction takes place in the presence of glutamine and ATP through an activated gamma-phospho-Glu-tRNA(Gln). This Pseudomonas fluorescens (strain Pf0-1) protein is Glutamyl-tRNA(Gln) amidotransferase subunit A.